The chain runs to 287 residues: Acetyl-coenzyme A carboxylase carboxyl transferase subunit beta (287 aa).

The 263-residue stretch at 25 to 287 folds into the CoA carboxyltransferase N-terminal domain; that stretch reads VWTKCSACEQ…KMLNTHVIEE (263 aa). Zn(2+) contacts are provided by Cys-29, Cys-32, Cys-48, and Cys-51. The segment at 29 to 51 adopts a C4-type zinc-finger fold; the sequence is CSACEQVLYRAELERNLEVCPKC.

Belongs to the AccD/PCCB family. In terms of assembly, acetyl-CoA carboxylase is a heterohexamer composed of biotin carboxyl carrier protein (AccB), biotin carboxylase (AccC) and two subunits each of ACCase subunit alpha (AccA) and ACCase subunit beta (AccD). Zn(2+) is required as a cofactor.

It is found in the cytoplasm. The enzyme catalyses N(6)-carboxybiotinyl-L-lysyl-[protein] + acetyl-CoA = N(6)-biotinyl-L-lysyl-[protein] + malonyl-CoA. Its pathway is lipid metabolism; malonyl-CoA biosynthesis; malonyl-CoA from acetyl-CoA: step 1/1. In terms of biological role, component of the acetyl coenzyme A carboxylase (ACC) complex. Biotin carboxylase (BC) catalyzes the carboxylation of biotin on its carrier protein (BCCP) and then the CO(2) group is transferred by the transcarboxylase to acetyl-CoA to form malonyl-CoA. This is Acetyl-coenzyme A carboxylase carboxyl transferase subunit beta from Aeromonas salmonicida (strain A449).